A 314-amino-acid chain; its full sequence is Dihydroorotate dehydrogenase (fumarate) (314 aa).

Residues lysine 46, 70–74 (NSMGL), and asparagine 130 contribute to the substrate site. 46–47 (KS) contributes to the FMN binding site. Position 130 (asparagine 130) interacts with FMN. Catalysis depends on nucleophile residues serine 132 and cysteine 133. Lysine 167 and isoleucine 195 together coordinate FMN. 196–197 (NS) contributes to the substrate binding site. Residues glycine 224, 252–253 (GG), and 274–275 (GT) contribute to the FMN site.

Belongs to the dihydroorotate dehydrogenase family. Type 1 subfamily. Homodimer. Requires FMN as cofactor.

It localises to the cytoplasm. It carries out the reaction (S)-dihydroorotate + fumarate = orotate + succinate. Its pathway is pyrimidine metabolism; UMP biosynthesis via de novo pathway. Catalyzes the conversion of dihydroorotate to orotate with fumarate as the electron acceptor. This chain is Dihydroorotate dehydrogenase (fumarate) (URA1), found in Saccharomyces mikatae (Yeast).